Consider the following 158-residue polypeptide: Small ribosomal subunit protein uS19 (158 aa).

The protein belongs to the universal ribosomal protein uS19 family.

Functionally, protein S19 forms a complex with S13 that binds strongly to the 16S ribosomal RNA. In Pyrobaculum aerophilum (strain ATCC 51768 / DSM 7523 / JCM 9630 / CIP 104966 / NBRC 100827 / IM2), this protein is Small ribosomal subunit protein uS19.